A 650-amino-acid polypeptide reads, in one-letter code: MGKIIGIDLGTTNSCVAIMEGNQVKVIENSEGTRTTPSIIAYMDDNEVLVGAPAKRQSVTNPKNTLFAVKRLIGRRFEEKEVQKDIGLMPYTIVKADNGDAWVEAHGEKLAPPQVSAEVLRKMKKTAEDYLGEPVTEAVITVPAYFNDSQRQATKDAGRIAGLEVKRIINEPTAAALAFGLDKVEKGDRKIAVYDLGGGTFDVSIIEIADVDGEMQFEVLSTNGDTFLGGEDFDQRIIDYIIGEFKKEQGVDLSKDVLALQRLKEAAEKAKIELSSSQQTEINLPYITADASGPKHLNLKITRAKLEALVEDLVERTIEPCRIAIKDAGVKVSDIDDVILVGGQTRMPKVLEKVKEFFGKDPRRDVNPDEAVAVGAAIQGQVLSGDRKDVLLLDVTPLSLGIETLGGVMTKMISKNTTIPTKHAQVYSTADDNQGAVTIKVFQGEREMAAGNKLLGEFNLEGIPPAPRGVPQIEVTFDIDANGILHVGAKDKATGKENKITIKANSGLSEAEIDQMIKDAEANAAEDHKLRELADSRNQGDALVHSTKKALTEYGDKLDAGEKEAIEASLKSLEELLKDSSADKAAIDAKVEELGKVSQKLGEKMYADMQAQQAGAAGAAGAAEGAAHAGGAQQAADDVVDAEFKEVKKD.

Position 200 is a phosphothreonine; by autocatalysis (Thr200). The interval 614–635 is disordered; the sequence is AGAAGAAGAAEGAAHAGGAQQA.

The protein belongs to the heat shock protein 70 family.

In terms of biological role, acts as a chaperone. The sequence is that of Chaperone protein DnaK from Burkholderia lata (strain ATCC 17760 / DSM 23089 / LMG 22485 / NCIMB 9086 / R18194 / 383).